A 692-amino-acid polypeptide reads, in one-letter code: Centrosomal protein of 83 kDa (692 aa).

Coiled-coil stretches lie at residues 32-625 (RCEH…SLIL) and 656-689 (HLQE…ELGS). Serine 689 carries the phosphoserine modification.

Belongs to the CEP83 family. Interacts with CEP164 and IFT20.

The protein localises to the cytoplasm. The protein resides in the cytoskeleton. It localises to the microtubule organizing center. It is found in the centrosome. Its subcellular location is the centriole. Its function is as follows. Component of the distal appendage region of the centriole involved in the initiation of primary cilium assembly. May collaborate with IFT20 in the trafficking of ciliary membrane proteins from the Golgi complex to the cilium during the initiation of primary cilium assembly. The protein is Centrosomal protein of 83 kDa (Cep83) of Mus musculus (Mouse).